The following is a 35-amino-acid chain: Entry-fusion complex protein OPG076 (35 aa).

A helical transmembrane segment spans residues 2 to 22; the sequence is LVVIMFFIAFVFCSWLSYSYL. Topologically, residues 23–35 are virion surface; that stretch reads CPYISTKELNKSR.

Belongs to the orthopoxvirus OPG076 family. In terms of assembly, component of the entry fusion complex (EFC) composed of OPG053, OPG076, OPG086, OPG094, OPG095, OPG099, OPG107, OPG143, OPG104, OPG147 and OPG155. Except for OPG095 and OPG053, each of the EFC proteins is required for assembly or stability of the complex. In terms of processing, unglycosylated because produced in viral factories instead of the classic ER -Golgi route.

The protein resides in the virion membrane. Functionally, component of the entry fusion complex (EFC), which consists of 11 proteins. During cell infection, this complex mediates entry of the virion core into the host cytoplasm by a two-step mechanism consisting of lipid mixing of the viral and cellular membranes and subsequent pore formation. The polypeptide is Entry-fusion complex protein OPG076 (OPG076) (Cynomys gunnisoni (Gunnison's prairie dog)).